Consider the following 228-residue polypeptide: Cytochrome c oxidase subunit 2 (228 aa).

Topologically, residues 1–14 are mitochondrial intermembrane; sequence MAYPLQLGFQDATS. Residues 15–45 form a helical membrane-spanning segment; that stretch reads PVMEELLHFHDHTLMIIFLISSLVLYIIMLM. Residues 46–59 lie on the Mitochondrial matrix side of the membrane; it reads LTSKLVHTNMMNVQ. A helical transmembrane segment spans residues 60–87; that stretch reads EMEMIWTILPAIILILIALPSLHTLYMM. The Mitochondrial intermembrane segment spans residues 88–228; that stretch reads DEINNPLLTI…FENWSASLAQ (141 aa). Cu cation is bound by residues histidine 161, cysteine 196, glutamate 198, cysteine 200, histidine 204, and methionine 207. Residue glutamate 198 coordinates Mg(2+). A Phosphotyrosine modification is found at tyrosine 218.

Belongs to the cytochrome c oxidase subunit 2 family. As to quaternary structure, component of the cytochrome c oxidase (complex IV, CIV), a multisubunit enzyme composed of 14 subunits. The complex is composed of a catalytic core of 3 subunits MT-CO1, MT-CO2 and MT-CO3, encoded in the mitochondrial DNA, and 11 supernumerary subunits COX4I, COX5A, COX5B, COX6A, COX6B, COX6C, COX7A, COX7B, COX7C, COX8 and NDUFA4, which are encoded in the nuclear genome. The complex exists as a monomer or a dimer and forms supercomplexes (SCs) in the inner mitochondrial membrane with NADH-ubiquinone oxidoreductase (complex I, CI) and ubiquinol-cytochrome c oxidoreductase (cytochrome b-c1 complex, complex III, CIII), resulting in different assemblies (supercomplex SCI(1)III(2)IV(1) and megacomplex MCI(2)III(2)IV(2)). Found in a complex with TMEM177, COA6, COX18, COX20, SCO1 and SCO2. Interacts with TMEM177 in a COX20-dependent manner. Interacts with COX20. Interacts with COX16. Cu cation is required as a cofactor.

It is found in the mitochondrion inner membrane. It carries out the reaction 4 Fe(II)-[cytochrome c] + O2 + 8 H(+)(in) = 4 Fe(III)-[cytochrome c] + 2 H2O + 4 H(+)(out). In terms of biological role, component of the cytochrome c oxidase, the last enzyme in the mitochondrial electron transport chain which drives oxidative phosphorylation. The respiratory chain contains 3 multisubunit complexes succinate dehydrogenase (complex II, CII), ubiquinol-cytochrome c oxidoreductase (cytochrome b-c1 complex, complex III, CIII) and cytochrome c oxidase (complex IV, CIV), that cooperate to transfer electrons derived from NADH and succinate to molecular oxygen, creating an electrochemical gradient over the inner membrane that drives transmembrane transport and the ATP synthase. Cytochrome c oxidase is the component of the respiratory chain that catalyzes the reduction of oxygen to water. Electrons originating from reduced cytochrome c in the intermembrane space (IMS) are transferred via the dinuclear copper A center (CU(A)) of subunit 2 and heme A of subunit 1 to the active site in subunit 1, a binuclear center (BNC) formed by heme A3 and copper B (CU(B)). The BNC reduces molecular oxygen to 2 water molecules using 4 electrons from cytochrome c in the IMS and 4 protons from the mitochondrial matrix. This Loxodonta africana (African elephant) protein is Cytochrome c oxidase subunit 2 (MT-CO2).